The primary structure comprises 249 residues: 1-(5-phosphoribosyl)-5-[(5-phosphoribosylamino)methylideneamino] imidazole-4-carboxamide isomerase (249 aa).

Aspartate 11 functions as the Proton acceptor in the catalytic mechanism. Aspartate 133 (proton donor) is an active-site residue.

This sequence belongs to the HisA/HisF family.

It localises to the cytoplasm. It catalyses the reaction 1-(5-phospho-beta-D-ribosyl)-5-[(5-phospho-beta-D-ribosylamino)methylideneamino]imidazole-4-carboxamide = 5-[(5-phospho-1-deoxy-D-ribulos-1-ylimino)methylamino]-1-(5-phospho-beta-D-ribosyl)imidazole-4-carboxamide. It participates in amino-acid biosynthesis; L-histidine biosynthesis; L-histidine from 5-phospho-alpha-D-ribose 1-diphosphate: step 4/9. The protein is 1-(5-phosphoribosyl)-5-[(5-phosphoribosylamino)methylideneamino] imidazole-4-carboxamide isomerase of Actinobacillus succinogenes (strain ATCC 55618 / DSM 22257 / CCUG 43843 / 130Z).